Consider the following 123-residue polypeptide: Large ribosomal subunit protein uL18 (123 aa).

This sequence belongs to the universal ribosomal protein uL18 family. In terms of assembly, part of the 50S ribosomal subunit; part of the 5S rRNA/L5/L18/L25 subcomplex. Contacts the 5S and 23S rRNAs.

This is one of the proteins that bind and probably mediate the attachment of the 5S RNA into the large ribosomal subunit, where it forms part of the central protuberance. The polypeptide is Large ribosomal subunit protein uL18 (Chlamydia caviae (strain ATCC VR-813 / DSM 19441 / 03DC25 / GPIC) (Chlamydophila caviae)).